The primary structure comprises 809 residues: Sodium/hydrogen exchanger 2 (809 aa).

A run of 7 helical transmembrane segments spans residues isoleucine 107–glycine 127, threonine 138–proline 158, isoleucine 169–phenylalanine 189, leucine 209–isoleucine 229, isoleucine 237–phenylalanine 257, phenylalanine 278–phenylalanine 298, and valine 308–phenylalanine 328. N-linked (GlcNAc...) asparagine glycosylation is present at asparagine 350. 4 consecutive transmembrane segments (helical) span residues tyrosine 361–serine 381, alanine 392–leucine 412, phenylalanine 430–proline 450, and leucine 459–isoleucine 479. Basic and acidic residues-rich tracts occupy residues isoleucine 648–alanine 660 and arginine 793–proline 809. 2 disordered regions span residues isoleucine 648–alanine 700 and glutamate 734–proline 809.

This sequence belongs to the monovalent cation:proton antiporter 1 (CPA1) transporter (TC 2.A.36) family. As to quaternary structure, interacts with CHP1 and CHP2. As to expression, high levels in intestine and kidney. Strongly expressed in gastric epithelial cells, with particularly high expression levels in mucous cells.

It is found in the apical cell membrane. It carries out the reaction Na(+)(in) + H(+)(out) = Na(+)(out) + H(+)(in). Functionally, plasma membrane Na(+)/H(+) antiporter. Mediates the electroneutral exchange of intracellular H(+) ions for extracellular Na(+). Major apical Na(+)/H(+) exchanger in the base of the colonic crypt. Controls in the colonic crypt intracellular pH (pHi) to direct colonic epithelial cell differentiation into the absorptive enterocyte lineage at the expense of the secretory lineage. The polypeptide is Sodium/hydrogen exchanger 2 (SLC9A2) (Oryctolagus cuniculus (Rabbit)).